The primary structure comprises 245 residues: LOB domain-containing protein 16 (245 aa).

The LOB domain maps to 14 to 116; the sequence is SPCGACKFLR…SQVMQMKAQI (103 aa). Residues 162–183 are disordered; that stretch reads YYGHVNPNNPVSPQSSLEESFS.

This sequence belongs to the LOB domain-containing protein family. As to quaternary structure, homodimer and heterodimer with LBD18. As to expression, expressed in roots and faintly in shoots.

The protein resides in the nucleus. In terms of biological role, transcriptional activator. Involved in lateral root formation. Regulated by the transcriptional activators ARF7 and ARF19. Functions in the initiation and emergence of lateral roots, in conjunction with LBD18, downstream of ARF7 and ARF19. Acts downstream of the auxin influx carriers AUX1 and LAX1 in the regulation of lateral root initiation and development. The polypeptide is LOB domain-containing protein 16 (LBD16) (Arabidopsis thaliana (Mouse-ear cress)).